A 186-amino-acid polypeptide reads, in one-letter code: Nicotinamide-nucleotide adenylyltransferase (186 aa).

The protein belongs to the archaeal NMN adenylyltransferase family.

The protein localises to the cytoplasm. It carries out the reaction beta-nicotinamide D-ribonucleotide + ATP + H(+) = diphosphate + NAD(+). It functions in the pathway cofactor biosynthesis; NAD(+) biosynthesis; NAD(+) from nicotinamide D-ribonucleotide: step 1/1. The polypeptide is Nicotinamide-nucleotide adenylyltransferase (Thermococcus sibiricus (strain DSM 12597 / MM 739)).